We begin with the raw amino-acid sequence, 164 residues long: Cyclic pyranopterin monophosphate synthase (164 aa).

Substrate-binding positions include 75-77 (MCH) and 116-117 (ME). Residue D131 is part of the active site.

The protein belongs to the MoaC family. Homohexamer; trimer of dimers.

It carries out the reaction (8S)-3',8-cyclo-7,8-dihydroguanosine 5'-triphosphate = cyclic pyranopterin phosphate + diphosphate. It functions in the pathway cofactor biosynthesis; molybdopterin biosynthesis. Its function is as follows. Catalyzes the conversion of (8S)-3',8-cyclo-7,8-dihydroguanosine 5'-triphosphate to cyclic pyranopterin monophosphate (cPMP). This is Cyclic pyranopterin monophosphate synthase from Staphylococcus aureus (strain MSSA476).